The sequence spans 525 residues: MSEKTLATAVDKRRTFAIISHPDAGKTTITEQLLLFGGVVREAGTVKARKSGNFAKSDWMEIEQKRGISVTSSVMQFDYQGKRINILDTPGHEDFSEDTYRTLMAVDSAVMVIDSAKGIEPQTKKLFQICKMRGIPIFTFMNKLDRDGREPLDLIAELEDVLGIEGYPMNWPIGMGKELKGLYDRYHQRVALFRPEDDAHQYLPLNADGDLATANELEEDGLYQEARDNMLLIEEAGNQFDAAKIASGDQTPVFFGSALANFGVKTFLETYLEYAPQPASHQTPDGATVAPTDPEFSGFVFKIQANMNPNHRDRIAFVRICSGEFERGMDVIQERTGKKMRLSNVTEFMADTRENVETAVAGDIIGLYDTGNFQIGDAIYTGKTKIKFEKLPQFTPELFVRVAAKNVMKQKSFHKGINQLVQEGAVQLYTSYSTGDYILGAVGQLQFEVFQFRMQNEYNSEVIMEPMGKKTARWINPDQLDERMSSSRNLLVKDSQGAPLFLFENRFAERWFQDKYPDVELTAKL.

The 269-residue stretch at 11 to 279 (DKRRTFAIIS…TYLEYAPQPA (269 aa)) folds into the tr-type G domain. GTP is bound by residues 20 to 27 (SHPDAGKT), 88 to 92 (DTPGH), and 142 to 145 (NKLD).

Belongs to the TRAFAC class translation factor GTPase superfamily. Classic translation factor GTPase family. PrfC subfamily.

It is found in the cytoplasm. Increases the formation of ribosomal termination complexes and stimulates activities of RF-1 and RF-2. It binds guanine nucleotides and has strong preference for UGA stop codons. It may interact directly with the ribosome. The stimulation of RF-1 and RF-2 is significantly reduced by GTP and GDP, but not by GMP. This is Peptide chain release factor 3 from Levilactobacillus brevis (strain ATCC 367 / BCRC 12310 / CIP 105137 / JCM 1170 / LMG 11437 / NCIMB 947 / NCTC 947) (Lactobacillus brevis).